Consider the following 239-residue polypeptide: tRNA (guanine-N(7)-)-methyltransferase (239 aa).

4 residues coordinate S-adenosyl-L-methionine: Glu69, Glu94, Asp121, and Asp144. Residue Asp144 is part of the active site. Lys148 is a binding site for substrate. Residues 150–155 (RHNKRR) form an interaction with RNA region. Residues Asp180 and 217 to 220 (TKFE) contribute to the substrate site.

It belongs to the class I-like SAM-binding methyltransferase superfamily. TrmB family. Monomer.

The catalysed reaction is guanosine(46) in tRNA + S-adenosyl-L-methionine = N(7)-methylguanosine(46) in tRNA + S-adenosyl-L-homocysteine. It participates in tRNA modification; N(7)-methylguanine-tRNA biosynthesis. Functionally, catalyzes the formation of N(7)-methylguanine at position 46 (m7G46) in tRNA. This chain is tRNA (guanine-N(7)-)-methyltransferase, found in Yersinia pseudotuberculosis serotype O:1b (strain IP 31758).